Consider the following 505-residue polypeptide: Protein nucleotidyltransferase YdiU (505 aa).

8 residues coordinate ATP: G102, G104, R105, K125, D137, G138, R188, and R195. D264 (proton acceptor) is an active-site residue. Mg(2+)-binding residues include N265 and D274. D274 provides a ligand contact to ATP.

Belongs to the SELO family. Mg(2+) serves as cofactor. Requires Mn(2+) as cofactor.

The enzyme catalyses L-seryl-[protein] + ATP = 3-O-(5'-adenylyl)-L-seryl-[protein] + diphosphate. It carries out the reaction L-threonyl-[protein] + ATP = 3-O-(5'-adenylyl)-L-threonyl-[protein] + diphosphate. The catalysed reaction is L-tyrosyl-[protein] + ATP = O-(5'-adenylyl)-L-tyrosyl-[protein] + diphosphate. It catalyses the reaction L-histidyl-[protein] + UTP = N(tele)-(5'-uridylyl)-L-histidyl-[protein] + diphosphate. The enzyme catalyses L-seryl-[protein] + UTP = O-(5'-uridylyl)-L-seryl-[protein] + diphosphate. It carries out the reaction L-tyrosyl-[protein] + UTP = O-(5'-uridylyl)-L-tyrosyl-[protein] + diphosphate. Its function is as follows. Nucleotidyltransferase involved in the post-translational modification of proteins. It can catalyze the addition of adenosine monophosphate (AMP) or uridine monophosphate (UMP) to a protein, resulting in modifications known as AMPylation and UMPylation. The chain is Protein nucleotidyltransferase YdiU from Nitrobacter winogradskyi (strain ATCC 25391 / DSM 10237 / CIP 104748 / NCIMB 11846 / Nb-255).